The following is a 239-amino-acid chain: Large ribosomal subunit protein uL2 (239 aa).

The tract at residues 200–239 is disordered; that stretch reads VNHPHGGKEHHIGRPSTVSRRAPPGRKVGHIAARRTGRRK. The span at 222-239 shows a compositional bias: basic residues; that stretch reads PPGRKVGHIAARRTGRRK.

The protein belongs to the universal ribosomal protein uL2 family. As to quaternary structure, part of the 50S ribosomal subunit. Forms a bridge to the 30S subunit in the 70S ribosome.

Functionally, one of the primary rRNA binding proteins. Required for association of the 30S and 50S subunits to form the 70S ribosome, for tRNA binding and peptide bond formation. It has been suggested to have peptidyltransferase activity; this is somewhat controversial. Makes several contacts with the 16S rRNA in the 70S ribosome. This is Large ribosomal subunit protein uL2 from Thermococcus onnurineus (strain NA1).